The chain runs to 743 residues: Phosphoribosylformylglycinamidine synthase subunit PurL (743 aa).

The active site involves histidine 50. 2 residues coordinate ATP: tyrosine 53 and lysine 92. Glutamate 94 is a binding site for Mg(2+). Substrate-binding positions include 95–98 (SHNH) and arginine 117. Catalysis depends on histidine 96, which acts as the Proton acceptor. Aspartate 118 contacts Mg(2+). A substrate-binding site is contributed by glutamine 241. Mg(2+) is bound at residue aspartate 269. 313 to 315 (ESQ) is a substrate binding site. Residues aspartate 494 and glycine 531 each coordinate ATP. Asparagine 532 is a binding site for Mg(2+). Residue serine 534 coordinates substrate.

It belongs to the FGAMS family. In terms of assembly, monomer. Part of the FGAM synthase complex composed of 1 PurL, 1 PurQ and 2 PurS subunits.

The protein resides in the cytoplasm. It catalyses the reaction N(2)-formyl-N(1)-(5-phospho-beta-D-ribosyl)glycinamide + L-glutamine + ATP + H2O = 2-formamido-N(1)-(5-O-phospho-beta-D-ribosyl)acetamidine + L-glutamate + ADP + phosphate + H(+). The protein operates within purine metabolism; IMP biosynthesis via de novo pathway; 5-amino-1-(5-phospho-D-ribosyl)imidazole from N(2)-formyl-N(1)-(5-phospho-D-ribosyl)glycinamide: step 1/2. In terms of biological role, part of the phosphoribosylformylglycinamidine synthase complex involved in the purines biosynthetic pathway. Catalyzes the ATP-dependent conversion of formylglycinamide ribonucleotide (FGAR) and glutamine to yield formylglycinamidine ribonucleotide (FGAM) and glutamate. The FGAM synthase complex is composed of three subunits. PurQ produces an ammonia molecule by converting glutamine to glutamate. PurL transfers the ammonia molecule to FGAR to form FGAM in an ATP-dependent manner. PurS interacts with PurQ and PurL and is thought to assist in the transfer of the ammonia molecule from PurQ to PurL. This is Phosphoribosylformylglycinamidine synthase subunit PurL from Sinorhizobium medicae (strain WSM419) (Ensifer medicae).